A 417-amino-acid chain; its full sequence is Nucleosome assembly protein (417 aa).

The interval 1–47 (MSDPIRTKPKSSMQIDNAPTPHNTPASVLNPSYLKNGNPVRAQAQEQ) is disordered. Positions 10–35 (KSSMQIDNAPTPHNTPASVLNPSYLK) are enriched in polar residues. Thr-20 and Thr-24 each carry phosphothreonine. Ser-27 carries the phosphoserine modification. Residue Lys-50 forms a Glycyl lysine isopeptide (Lys-Gly) (interchain with G-Cter in ubiquitin) linkage. Thr-53 carries the phosphothreonine modification. Phosphoserine is present on residues Ser-69, Ser-76, Ser-82, Ser-98, Ser-104, and Ser-140. An interaction with NBA1 region spans residues 143–362 (EQPKPEQIAK…IPRAVDWFTG (220 aa)). A phosphoserine; by CK2 mark is found at Ser-159 and Ser-177. The H-T-H motif DNA-binding region spans 330–356 (LEEDLEERLALDYSIGEQLKDKLIPRA). A disordered region spans residues 364–417 (ALEFEFEEDEEEADEDEDEEEDDDHGLEDDDGESAEEQDDFAGRPEQAPECKQS). Acidic residues predominate over residues 367 to 403 (FEFEEDEEEADEDEDEEEDDDHGLEDDDGESAEEQDD). Ser-397 is modified (phosphoserine; by CK2). Positions 404 to 417 (FAGRPEQAPECKQS) are enriched in basic and acidic residues.

The protein belongs to the nucleosome assembly protein (NAP) family. As to quaternary structure, component of the GIN4 complex composed of at least BNI5, CDC3, CDC10, CDC11, CDC12, GIN4, NAP1 and SHS1 which forms a ring at the bud neck. Homodimer (in-vitro). Interacts with the B-type cyclin CLB2. Interacts with 60S ribosomal protein L18 (RPL18A or RPL18B), CKA2, CKI1, eukaryotic elongation factor 1 complex eEF1A (TEF1 or TEF2), FOL1, HSC82, HTA2, HTB2, HTZ1, KAP114, KCC4, NIS1, SSA1, SSA2, SSB1, SSC1, SHM1, SIP5 and TCO89. Interacts with NBA1. Interacts with histone H3/H4 heterodimers. Phosphorylation by CK2 is required for normal progression through S phase. CK2 phosphorylation is not required for correct bud formation nor histone binding.

The protein localises to the cytoplasm. The protein resides in the nucleus. It is found in the bud neck. Acidic protein, which assembles histones into an octamer (in vitro). Involved in the regulation of the localization and the function of the septins during mitosis. Involved in the function of B-type cyclins. This chain is Nucleosome assembly protein, found in Saccharomyces cerevisiae (strain ATCC 204508 / S288c) (Baker's yeast).